The primary structure comprises 132 residues: UPF0251 protein PTH_0588 (132 aa).

It belongs to the UPF0251 family.

The sequence is that of UPF0251 protein PTH_0588 from Pelotomaculum thermopropionicum (strain DSM 13744 / JCM 10971 / SI).